The sequence spans 117 residues: MAFLMSEFIGLGLAGASVLSNALLRRQELQLQRQALENGLVLKADQLGRLGFNPNEVKNVIVGNSFSSNVRLSNMHNDASVVNAYNVYNPASNGIRKKIKSLNNSVKIYNTTGESSV.

It belongs to the lagovirus VP2 protein family. As to quaternary structure, homooligomer. The portal-like structure consists in 12 copies of VP2. Interacts with capsid protein VP1.

The protein localises to the virion. The protein resides in the host cytoplasm. Functionally, minor structural protein that forms a portal-like structure at a unique three-fold axis of symmetry, following binding to the host receptor. The channel formed by VP2 may allow the delivery of the viral genome through the host endosomal membrane. This Rabbit hemorrhagic disease virus (strain AST89) (Ra/LV/RHDV/AST89/1989/SP) protein is Minor capsid protein VP2.